The sequence spans 486 residues: Galactose-1-phosphate uridylyltransferase (486 aa).

This sequence belongs to the galactose-1-phosphate uridylyltransferase type 2 family.

It is found in the cytoplasm. It carries out the reaction alpha-D-galactose 1-phosphate + UDP-alpha-D-glucose = alpha-D-glucose 1-phosphate + UDP-alpha-D-galactose. It functions in the pathway carbohydrate metabolism; galactose metabolism. In Lacticaseibacillus casei (strain BL23) (Lactobacillus casei), this protein is Galactose-1-phosphate uridylyltransferase.